The following is a 182-amino-acid chain: CASP-like protein 5B1 (182 aa).

The tract at residues 1 to 20 (GDASHAVDHPIGGHPEHEHD) is disordered. The Cytoplasmic segment spans residues 1–41 (GDASHAVDHPIGGHPEHEHDLREEEGPLIFPMKDLPGTPGT). Residues 42–62 (VGGLALRMGQFIFAAASVVIM) traverse the membrane as a helical segment. At 63–73 (VTSDEFINFTA) the chain is on the extracellular side. N-linked (GlcNAc...) asparagine glycosylation is present at Asn-70. A helical membrane pass occupies residues 74–94 (FCYLAAAMALQFLWSFVLATI). Over 95 to 108 (DVYALLIKRGLPNS) the chain is Cytoplasmic. Residues 109-129 (ILLSLFVVGDWVTATLSLAAA) form a helical membrane-spanning segment. Residues 130–159 (CSTAGITVLFDKDLNYCDQMHCRRYQLSAT) are Extracellular-facing. The chain crosses the membrane as a helical span at residues 160-180 (MAFFSWVLIAISSLITLLLLV). Residues 181–182 (SE) are Cytoplasmic-facing.

This sequence belongs to the Casparian strip membrane proteins (CASP) family. As to quaternary structure, homodimer and heterodimers.

The protein resides in the cell membrane. The polypeptide is CASP-like protein 5B1 (Picea sitchensis (Sitka spruce)).